A 60-amino-acid polypeptide reads, in one-letter code: Small ribosomal subunit protein bS21 (60 aa).

The disordered stretch occupies residues 36–60; sequence QFFETPQEKHKRKEATRRRQRSRRR. Residues 44-60 show a composition bias toward basic residues; the sequence is KHKRKEATRRRQRSRRR.

Belongs to the bacterial ribosomal protein bS21 family.

This is Small ribosomal subunit protein bS21 (rpsU) from Synechocystis sp. (strain ATCC 27184 / PCC 6803 / Kazusa).